The sequence spans 513 residues: ATP synthase subunit alpha (513 aa).

Residue 169–176 (GDRQTGKT) coordinates ATP.

This sequence belongs to the ATPase alpha/beta chains family. In terms of assembly, F-type ATPases have 2 components, CF(1) - the catalytic core - and CF(0) - the membrane proton channel. CF(1) has five subunits: alpha(3), beta(3), gamma(1), delta(1), epsilon(1). CF(0) has three main subunits: a(1), b(2) and c(9-12). The alpha and beta chains form an alternating ring which encloses part of the gamma chain. CF(1) is attached to CF(0) by a central stalk formed by the gamma and epsilon chains, while a peripheral stalk is formed by the delta and b chains.

It localises to the cell inner membrane. It carries out the reaction ATP + H2O + 4 H(+)(in) = ADP + phosphate + 5 H(+)(out). In terms of biological role, produces ATP from ADP in the presence of a proton gradient across the membrane. The alpha chain is a regulatory subunit. The sequence is that of ATP synthase subunit alpha from Pasteurella multocida (strain Pm70).